A 230-amino-acid chain; its full sequence is Lipoprotein-releasing system ATP-binding protein LolD (230 aa).

One can recognise an ABC transporter domain in the interval leucine 10–leucine 228. Residue glycine 46–serine 53 participates in ATP binding.

It belongs to the ABC transporter superfamily. Lipoprotein translocase (TC 3.A.1.125) family. In terms of assembly, the complex is composed of two ATP-binding proteins (LolD) and two transmembrane proteins (LolC and LolE).

Its subcellular location is the cell inner membrane. Functionally, part of the ABC transporter complex LolCDE involved in the translocation of mature outer membrane-directed lipoproteins, from the inner membrane to the periplasmic chaperone, LolA. Responsible for the formation of the LolA-lipoprotein complex in an ATP-dependent manner. In Bordetella avium (strain 197N), this protein is Lipoprotein-releasing system ATP-binding protein LolD.